The following is a 446-amino-acid chain: Protein IQ-DOMAIN 19 (446 aa).

The disordered stretch occupies residues 93-140; sequence IPGTPKEKRRWSFRRSSATGPPPPACAITLKDSPPPPPPPPPPPPLQQ. A compositionally biased stretch (pro residues) spans 125-139; that stretch reads SPPPPPPPPPPPPLQ. IQ domains lie at 163 to 191 and 192 to 214; these read EEFAAIKIQACYRSHLARKALRALKGLVK and LQALVRGHLVRKQATATLRCMQA. Residues 214–231 form a calmodulin-binding region; it reads ALITLQAKAREQRIRMIG. Low complexity predominate over residues 332 to 345; it reads QSSKAKARSQSAPK. Residues 332–398 form a disordered region; sequence QSSKAKARSQ…TAKESQQHHH (67 aa). Positions 379–392 are enriched in polar residues; it reads QRSSSQLGSNTAKE.

This sequence belongs to the IQD family. As to quaternary structure, binds to multiple calmodulin (CaM) in the presence of Ca(2+) and CaM-like proteins.

It is found in the cytoplasm. The protein localises to the cytoskeleton. The protein resides in the cell membrane. In terms of biological role, may be involved in cooperative interactions with calmodulins or calmodulin-like proteins. Recruits calmodulin proteins to microtubules, thus being a potential scaffold in cellular signaling and trafficking. Acts as a positive regulator of trichome branch initiation. May associate with nucleic acids and regulate gene expression at the transcriptional or post-transcriptional level. In Arabidopsis thaliana (Mouse-ear cress), this protein is Protein IQ-DOMAIN 19.